Consider the following 448-residue polypeptide: MTATASPSDTKGAAAPRISFVSLGCPKALVDSERILTHLRAEGYELSRRHDGADVVIVNTCGFLDSAKAESLAAIGEAMAENGRVIVTGCMGAQPEEIREKYPNLLAVTGPQAYESVVAAVHEAVPPAHDPFLDLIPPQGVKLTPRHYAYLKISEGCNNRCTFCIIPSLRGDLVSRPAGDVLREAEKLVKAGVKELLVVSQDTSAYGIDTRYASSPWQDREVRARFYDLAKELGELGAWVRLHYVYPYPHVDEVIPLMAEGKILPYLDMPLQHASPSVLKRMRRPGNQEKQLDRIRRWREICPDLAIRSTFIVGFPGETDAEFEELLDWIREARLERVGCFEYEPVRGATANDLGLLVPPEVKAERKRRFMEAQSHVSLRLQRAKVGKRLSVIIDEAGPTGARGRSKADAPEIDGSVHVTSRRPVRPGDIVTVKIERADAYDLHGIAV.

An MTTase N-terminal domain is found at 16–126 (PRISFVSLGC…VVAAVHEAVP (111 aa)). The [4Fe-4S] cluster site is built by C25, C61, C90, C157, C161, and C164. One can recognise a Radical SAM core domain in the interval 143–380 (LTPRHYAYLK…MEAQSHVSLR (238 aa)). Positions 383–448 (RAKVGKRLSV…DAYDLHGIAV (66 aa)) constitute a TRAM domain.

Belongs to the methylthiotransferase family. RimO subfamily. [4Fe-4S] cluster serves as cofactor.

It is found in the cytoplasm. The catalysed reaction is L-aspartate(89)-[ribosomal protein uS12]-hydrogen + (sulfur carrier)-SH + AH2 + 2 S-adenosyl-L-methionine = 3-methylsulfanyl-L-aspartate(89)-[ribosomal protein uS12]-hydrogen + (sulfur carrier)-H + 5'-deoxyadenosine + L-methionine + A + S-adenosyl-L-homocysteine + 2 H(+). Functionally, catalyzes the methylthiolation of an aspartic acid residue of ribosomal protein uS12. The protein is Ribosomal protein uS12 methylthiotransferase RimO of Methylorubrum extorquens (strain PA1) (Methylobacterium extorquens).